The chain runs to 237 residues: Class B acid phosphatase (237 aa).

A signal peptide spans 1 to 25 (MRKITLALSAACLLFSLNNAVVARA). D69 serves as the catalytic Nucleophile. Residues D69 and D71 each coordinate Mg(2+). D71 serves as the catalytic Proton donor. Substrate is bound by residues 137–138 (TG) and K177. D192 is a binding site for Mg(2+).

The protein belongs to the class B bacterial acid phosphatase family. As to quaternary structure, homotetramer. Mg(2+) serves as cofactor.

The protein resides in the periplasm. The catalysed reaction is a phosphate monoester + H2O = an alcohol + phosphate. Its function is as follows. Dephosphorylates several organic phosphate monoesters. Also has a phosphotransferase activity catalyzing the transfer of low-energy phosphate groups from organic phosphate monoesters to free hydroxyl groups of various organic compounds. The sequence is that of Class B acid phosphatase from Enterobacter sp. (strain 638).